A 6077-amino-acid polypeptide reads, in one-letter code: Nonribosomal peptide synthetase nlsA (6077 aa).

Positions 417–618 (VFAYAPLIHG…LGRKDSQIKL (202 aa)) are adenylation 1. In terms of domain architecture, Carrier 1 spans 751–827 (HSEVTVEDRL…DLVTRVQEIK (77 aa)). Residue serine 788 is modified to O-(pantetheine 4'-phosphoryl)serine. 2 condensation regions span residues 842 to 1267 (LSPI…GKRL) and 1309 to 1737 (EDIY…KQRI). 2 adenylation regions span residues 1757–2149 (QEKM…YLGE) and 2755–3157 (DRVI…QVKL). A Carrier 2 domain is found at 3297-3373 (AVERAAESTL…DMAKCCDDTE (77 aa)). Serine 3334 bears the O-(pantetheine 4'-phosphoryl)serine mark. The segment at 3524–3779 (DSRYRQCLYK…LLSVPRDSLM (256 aa)) is condensation 3. Residues 3816–4213 (ENAIMHPQAT…LGRKDHQVKL (398 aa)) are adenylation 4. Residues 4361–4437 (REGDATPAII…ELAVSCGTKP (77 aa)) enclose the Carrier 3 domain. Position 4398 is an O-(pantetheine 4'-phosphoryl)serine (serine 4398). Condensation stretches follow at residues 4451 to 4869 (PLSP…RVLE) and 4916 to 5260 (VEDI…EDKT). In terms of domain architecture, Carrier 4 spans 5334 to 5410 (RAPNDSEKQL…NMMALINDRK (77 aa)). Serine 5371 is subject to O-(pantetheine 4'-phosphoryl)serine. A condensation 6 region spans residues 5476-5885 (DVLPVTDFQA…SLVANPNVAL (410 aa)). The region spanning 5921–6004 (SEILVHSDLI…GHMAVLALNM (84 aa)) is the Carrier 5 domain. The span at 6013–6027 (DSDAAPAPAYAPVDA) shows a compositional bias: low complexity. The disordered stretch occupies residues 6013–6047 (DSDAAPAPAYAPVDARASRNVSTSRQQQEGLPLPA). Residues 6031 to 6041 (RNVSTSRQQQE) show a composition bias toward polar residues.

This sequence belongs to the NRP synthetase family.

It participates in secondary metabolite biosynthesis. Its function is as follows. Nonribosomal peptide synthetase involved in the synthesis of nidulanin A and derived compounds. Nidulanin A is a tetracyclopeptide with the sequence L-Phe-L-Kyn-L-Val-D-Val and an isoprene unit N-linked to the amino group of L-kynurenine. The NRPS nlsA is responsible of the synthesis of the cyclopeptide and the prenyltransferase nptA adds the isoprene unit on the L-kynurenine residue of nidulanin A. Further modifications lead to additional oxygenated related compounds. The polypeptide is Nonribosomal peptide synthetase nlsA (Emericella nidulans (strain FGSC A4 / ATCC 38163 / CBS 112.46 / NRRL 194 / M139) (Aspergillus nidulans)).